Here is a 293-residue protein sequence, read N- to C-terminus: Diaminopimelate epimerase (293 aa).

Asn17, Gln47, and Asn67 together coordinate substrate. Cys76 functions as the Proton donor in the catalytic mechanism. Residues 77 to 78, Asn164, Asn197, and 215 to 216 contribute to the substrate site; these read GN and ER. Cys224 acts as the Proton acceptor in catalysis. 225-226 contributes to the substrate binding site; sequence GS.

This sequence belongs to the diaminopimelate epimerase family. Homodimer.

The protein localises to the cytoplasm. The enzyme catalyses (2S,6S)-2,6-diaminopimelate = meso-2,6-diaminopimelate. It participates in amino-acid biosynthesis; L-lysine biosynthesis via DAP pathway; DL-2,6-diaminopimelate from LL-2,6-diaminopimelate: step 1/1. Its function is as follows. Catalyzes the stereoinversion of LL-2,6-diaminopimelate (L,L-DAP) to meso-diaminopimelate (meso-DAP), a precursor of L-lysine and an essential component of the bacterial peptidoglycan. The chain is Diaminopimelate epimerase from Rhodopseudomonas palustris (strain HaA2).